The sequence spans 436 residues: UDP-N-acetylmuramate--L-alanine ligase (436 aa).

108–114 (GAHGKTS) is a binding site for ATP.

Belongs to the MurCDEF family.

It is found in the cytoplasm. It carries out the reaction UDP-N-acetyl-alpha-D-muramate + L-alanine + ATP = UDP-N-acetyl-alpha-D-muramoyl-L-alanine + ADP + phosphate + H(+). It functions in the pathway cell wall biogenesis; peptidoglycan biosynthesis. In terms of biological role, cell wall formation. The protein is UDP-N-acetylmuramate--L-alanine ligase of Bacillus cereus (strain AH187).